The following is a 186-amino-acid chain: Casparian strip membrane protein 3 (186 aa).

Topologically, residues 1–26 (MTKSTYVELGEEKTSNQKGNMKRGVS) are cytoplasmic. The helical transmembrane segment at 27–47 (ILDFILRLIAIVATLASAIAM) threads the bilayer. Residues 48-74 (GTTDESLPFFTQFVRFRANYDDLPTLR) are Extracellular-facing. A helical membrane pass occupies residues 75–95 (FFVVASAIVSGYLILSLPLSI). At 96–107 (LHIIRSSAGMTR) the chain is on the cytoplasmic side. A helical transmembrane segment spans residues 108 to 128 (VIFIILDTVMLGLLTAGSSAA). The Extracellular portion of the chain corresponds to 129-161 (ASIVYLAHKGNRKANWFAFCQQYNSFCERISGS). A helical transmembrane segment spans residues 162 to 182 (LIGSFIAIPLFIMLILLSALV). At 183–186 (LSRR) the chain is on the cytoplasmic side.

This sequence belongs to the Casparian strip membrane proteins (CASP) family. As to quaternary structure, homodimer and heterodimers.

The protein resides in the cell membrane. In terms of biological role, regulates membrane-cell wall junctions and localized cell wall deposition. Required for establishment of the Casparian strip membrane domain (CSD) and the subsequent formation of Casparian strips, a cell wall modification of the root endodermis that determines an apoplastic barrier between the intraorganismal apoplasm and the extraorganismal apoplasm and prevents lateral diffusion. The sequence is that of Casparian strip membrane protein 3 from Medicago truncatula (Barrel medic).